The sequence spans 153 residues: SsrA-binding protein (153 aa).

This sequence belongs to the SmpB family.

It is found in the cytoplasm. Required for rescue of stalled ribosomes mediated by trans-translation. Binds to transfer-messenger RNA (tmRNA), required for stable association of tmRNA with ribosomes. tmRNA and SmpB together mimic tRNA shape, replacing the anticodon stem-loop with SmpB. tmRNA is encoded by the ssrA gene; the 2 termini fold to resemble tRNA(Ala) and it encodes a 'tag peptide', a short internal open reading frame. During trans-translation Ala-aminoacylated tmRNA acts like a tRNA, entering the A-site of stalled ribosomes, displacing the stalled mRNA. The ribosome then switches to translate the ORF on the tmRNA; the nascent peptide is terminated with the 'tag peptide' encoded by the tmRNA and targeted for degradation. The ribosome is freed to recommence translation, which seems to be the essential function of trans-translation. In Orientia tsutsugamushi (strain Ikeda) (Rickettsia tsutsugamushi), this protein is SsrA-binding protein.